The following is a 254-amino-acid chain: Glucosamine-6-phosphate deaminase (254 aa).

Aspartate 65 acts as the Proton acceptor; for enolization step in catalysis. Catalysis depends on asparagine 134, which acts as the For ring-opening step. Catalysis depends on histidine 136, which acts as the Proton acceptor; for ring-opening step. Glutamate 141 functions as the For ring-opening step in the catalytic mechanism.

The protein belongs to the glucosamine/galactosamine-6-phosphate isomerase family. NagB subfamily.

It carries out the reaction alpha-D-glucosamine 6-phosphate + H2O = beta-D-fructose 6-phosphate + NH4(+). Its pathway is amino-sugar metabolism; N-acetylneuraminate degradation; D-fructose 6-phosphate from N-acetylneuraminate: step 5/5. Catalyzes the reversible isomerization-deamination of glucosamine 6-phosphate (GlcN6P) to form fructose 6-phosphate (Fru6P) and ammonium ion. This chain is Glucosamine-6-phosphate deaminase, found in Corynebacterium aurimucosum (strain ATCC 700975 / DSM 44827 / CIP 107346 / CN-1) (Corynebacterium nigricans).